The primary structure comprises 100 residues: Urease subunit gamma (100 aa).

The protein belongs to the urease gamma subunit family. In terms of assembly, heterotrimer of UreA (gamma), UreB (beta) and UreC (alpha) subunits. Three heterotrimers associate to form the active enzyme.

It localises to the cytoplasm. It catalyses the reaction urea + 2 H2O + H(+) = hydrogencarbonate + 2 NH4(+). The protein operates within nitrogen metabolism; urea degradation; CO(2) and NH(3) from urea (urease route): step 1/1. Functionally, ureolysis may allow urea to be employed as a nitrogen source for growth and produces ammonia which may protect from killing at low pH. The protein is Urease subunit gamma of Streptococcus salivarius (strain 57.I).